Here is a 360-residue protein sequence, read N- to C-terminus: Peptide chain release factor 1 (360 aa).

Residue Q235 is modified to N5-methylglutamine. A compositionally biased stretch (basic and acidic residues) spans 283–293; it reads EREAQAKEASA. Residues 283-305 form a disordered region; that stretch reads EREAQAKEASARKSLIGSGDRSD.

This sequence belongs to the prokaryotic/mitochondrial release factor family. Methylated by PrmC. Methylation increases the termination efficiency of RF1.

The protein localises to the cytoplasm. Functionally, peptide chain release factor 1 directs the termination of translation in response to the peptide chain termination codons UAG and UAA. The protein is Peptide chain release factor 1 of Ralstonia pickettii (strain 12J).